Here is a 208-residue protein sequence, read N- to C-terminus: NADH-ubiquinone oxidoreductase chain 4 (208 aa).

6 helical membrane passes run 23–43 (VWINVTTYSLLINLISINLLW), 60–80 (PLSAPLLVLTTWLLPLMLLAS), 93–113 (KLYISLLVCLQTLLIMTFSAN), 114–134 (ELIMFYILFEATLIPTLIIIT), 147–167 (IYFLFYTLVGSIPLLIALIYI), and 185–205 (PINQTWSNNILWLACIMAFMV).

It belongs to the complex I subunit 4 family. In terms of assembly, core subunit of respiratory chain NADH dehydrogenase (Complex I) which is composed of 45 different subunits.

Its subcellular location is the mitochondrion inner membrane. It catalyses the reaction a ubiquinone + NADH + 5 H(+)(in) = a ubiquinol + NAD(+) + 4 H(+)(out). Its function is as follows. Core subunit of the mitochondrial membrane respiratory chain NADH dehydrogenase (Complex I) which catalyzes electron transfer from NADH through the respiratory chain, using ubiquinone as an electron acceptor. Essential for the catalytic activity and assembly of complex I. The polypeptide is NADH-ubiquinone oxidoreductase chain 4 (MT-ND4) (Microtus pennsylvanicus (Meadow vole)).